Here is a 146-residue protein sequence, read N- to C-terminus: Hut operon positive regulatory protein (146 aa).

It belongs to the HutP family. Homohexamer.

Its function is as follows. Antiterminator that binds to cis-acting regulatory sequences on the mRNA in the presence of histidine, thereby suppressing transcription termination and activating the hut operon for histidine utilization. The sequence is that of Hut operon positive regulatory protein from Bacillus cereus (strain AH820).